Reading from the N-terminus, the 229-residue chain is Large ribosomal subunit protein uL1c (229 aa).

Belongs to the universal ribosomal protein uL1 family. Part of the 50S ribosomal subunit.

Its subcellular location is the plastid. It localises to the chloroplast. Its function is as follows. Binds directly to 23S rRNA. Might be involved in E site tRNA release (Potential). The sequence is that of Large ribosomal subunit protein uL1c (rpl1) from Pyropia yezoensis (Susabi-nori).